We begin with the raw amino-acid sequence, 287 residues long: Putative sugar uptake protein EF_0928 (287 aa).

The next 10 helical transmembrane spans lie at 5–27 (IALV…GGSA), 32–49 (LGMT…FFVI), 53–71 (LTTA…WSLG), 84–106 (VSVG…GAVF), 116–134 (FVVG…YLTA), 155–177 (IRAL…ATGL), 182–200 (IILP…FAFK), 207–229 (FVWM…LLTM), 234–256 (LAIS…IFLL), and 265–284 (MFYV…LLGY).

This sequence belongs to the GRP transporter (TC 2.A.7.5) family.

It is found in the cell membrane. In Enterococcus faecalis (strain ATCC 700802 / V583), this protein is Putative sugar uptake protein EF_0928.